Reading from the N-terminus, the 182-residue chain is Probable RNA 2'-phosphotransferase (182 aa).

The protein belongs to the KptA/TPT1 family.

Its function is as follows. Removes the 2'-phosphate from RNA via an intermediate in which the phosphate is ADP-ribosylated by NAD followed by a presumed transesterification to release the RNA and generate ADP-ribose 1''-2''-cyclic phosphate (APPR&gt;P). May function as an ADP-ribosylase. In Pseudomonas aeruginosa (strain UCBPP-PA14), this protein is Probable RNA 2'-phosphotransferase.